The chain runs to 376 residues: Alcohol dehydrogenase class-3 (376 aa).

A1 is modified (N-acetylalanine). Zn(2+) is bound by residues C47, H69, C99, C102, C105, C113, and C176.

The protein belongs to the zinc-containing alcohol dehydrogenase family. Class-III subfamily. In terms of assembly, homodimer. Requires Zn(2+) as cofactor.

The protein resides in the cytoplasm. The catalysed reaction is a primary alcohol + NAD(+) = an aldehyde + NADH + H(+). It carries out the reaction a secondary alcohol + NAD(+) = a ketone + NADH + H(+). It catalyses the reaction S-(hydroxymethyl)glutathione + NADP(+) = S-formylglutathione + NADPH + H(+). The enzyme catalyses S-(hydroxymethyl)glutathione + NAD(+) = S-formylglutathione + NADH + H(+). The catalysed reaction is S-nitrosoglutathione + NADH + H(+) = S-(hydroxysulfenamide)glutathione + NAD(+). Its function is as follows. Class-III ADH is remarkably ineffective in oxidizing ethanol, but it readily catalyzes the oxidation of long-chain primary alcohols and the oxidation of S-(hydroxymethyl) glutathione. Also acts as a S-nitroso-glutathione reductase by catalyzing the NADH-dependent reduction of S-nitrosoglutathione, thereby regulating protein S-nitrosylation. The chain is Alcohol dehydrogenase class-3 from Scyliorhinus canicula (Small-spotted catshark).